Reading from the N-terminus, the 532-residue chain is ATP synthase subunit alpha (532 aa).

171-178 (GDRQTGKT) contacts ATP.

This sequence belongs to the ATPase alpha/beta chains family. As to quaternary structure, F-type ATPases have 2 components, CF(1) - the catalytic core - and CF(0) - the membrane proton channel. CF(1) has five subunits: alpha(3), beta(3), gamma(1), delta(1), epsilon(1). CF(0) has three main subunits: a(1), b(2) and c(9-12). The alpha and beta chains form an alternating ring which encloses part of the gamma chain. CF(1) is attached to CF(0) by a central stalk formed by the gamma and epsilon chains, while a peripheral stalk is formed by the delta and b chains.

The protein localises to the cell membrane. It catalyses the reaction ATP + H2O + 4 H(+)(in) = ADP + phosphate + 5 H(+)(out). Produces ATP from ADP in the presence of a proton gradient across the membrane. The alpha chain is a regulatory subunit. This is ATP synthase subunit alpha from Amoebophilus asiaticus (strain 5a2).